The sequence spans 447 residues: GTPase Der (447 aa).

EngA-type G domains are found at residues 2–166 (YRVA…PEYE) and 183–358 (IKVA…NQSW). GTP contacts are provided by residues 8-15 (GRPNVGKS), 55-59 (DTGGY), 118-121 (NKID), 189-196 (GKPNAGKS), 236-240 (DTAGL), and 301-304 (NKID). Residues 359 to 443 (KRVGTGQLNR…PIKLLLRGKE (85 aa)) form the KH-like domain.

Belongs to the TRAFAC class TrmE-Era-EngA-EngB-Septin-like GTPase superfamily. EngA (Der) GTPase family. Associates with the 50S ribosomal subunit.

Its function is as follows. GTPase that plays an essential role in the late steps of ribosome biogenesis. This is GTPase Der from Persephonella marina (strain DSM 14350 / EX-H1).